A 924-amino-acid chain; its full sequence is DNA repair and recombination protein RDH54 (924 aa).

Residues 1–10 show a composition bias toward basic and acidic residues; sequence MQIPKYENKP. Disordered stretches follow at residues 1–21 and 155–183; these read MQIPKYENKPFKPPRRVGSNK and EALSQNMGNPNPPTTSTTETVPSTKNDGG. Positions 168–178 are enriched in low complexity; that stretch reads TTSTTETVPST. The Helicase ATP-binding domain maps to 299–487; the sequence is LENDSDISGC…FTIIDFINPG (189 aa). ATP is bound at residue 346–353; it reads IPLTGLCK. The DEGH box motif lies at 472 to 475; it reads NDLN. Residue lysine 615 forms a Glycyl lysine isopeptide (Lys-Gly) (interchain with G-Cter in ubiquitin) linkage. The region spanning 631–790 is the Helicase C-terminal domain; it reads KLRVLMTLLE…DSEMRNKESS (160 aa).

It belongs to the SNF2/RAD54 helicase family. In terms of assembly, interacts with RAD51 and DMC1.

The protein resides in the nucleus. It catalyses the reaction ATP + H2O = ADP + phosphate + H(+). Its function is as follows. Involved in the recombinational repair of double-strand breaks (DSB) in DNA during mitosis and meiosis. Has DNA dependent ATPase activity. Promotes D-loop (displacement loop) formation with RAD51 recombinase. Modifies the topology of double-stranded DNA during the D-loop reaction to facilitate the invasion of the homologous duplex molecule by the initiating single-stranded DNA substrate. Required for adaptation from G2/M checkpoint arrest induced by a double strand break, by participating in monitoring the extent of single-stranded DNA produced by resection of DNA ends. This role is distinct from its roles in recombination. Promotes colocalization of RAD51 and DMC1 during meiotic recombination. Involved in crossover interference. The sequence is that of DNA repair and recombination protein RDH54 (RDH54) from Saccharomyces cerevisiae (strain RM11-1a) (Baker's yeast).